The chain runs to 208 residues: Large ribosomal subunit protein uL3 (208 aa).

The tract at residues 123–146 (RHGQSRGPMAHGSRYHRRPGSMGP) is disordered.

This sequence belongs to the universal ribosomal protein uL3 family. As to quaternary structure, part of the 50S ribosomal subunit. Forms a cluster with proteins L14 and L19.

Functionally, one of the primary rRNA binding proteins, it binds directly near the 3'-end of the 23S rRNA, where it nucleates assembly of the 50S subunit. The polypeptide is Large ribosomal subunit protein uL3 (Streptococcus thermophilus (strain CNRZ 1066)).